The following is a 269-amino-acid chain: MANWHEWAELLERVREENPLVHNITNVVVTNWTANGLLALGASPVMAYAKEEVGEMAKLAGALVLNIGTLNDKEVEAMLVAGQAANEAGVPVIFDPVGAGATRYRTETARRIAEQVKLAVIRGNAAEIANMIGEAWTIKGVDAGGGSGDRVALAKRAAEQLGAVVAITGKEDVVADGQTTYLIQNGHPLLTKVTGAGCLLTSVIGAFAAVERDAAAAAVAALVYYGVAAEQAAAKAGERGPGSFQTAFLDALAYTSVDDVKRHGRVEQR.

A substrate-binding site is contributed by Met46. Residues Arg122 and Thr168 each contribute to the ATP site. A substrate-binding site is contributed by Gly195.

Belongs to the Thz kinase family. It depends on Mg(2+) as a cofactor.

The catalysed reaction is 5-(2-hydroxyethyl)-4-methylthiazole + ATP = 4-methyl-5-(2-phosphooxyethyl)-thiazole + ADP + H(+). The protein operates within cofactor biosynthesis; thiamine diphosphate biosynthesis; 4-methyl-5-(2-phosphoethyl)-thiazole from 5-(2-hydroxyethyl)-4-methylthiazole: step 1/1. Its function is as follows. Catalyzes the phosphorylation of the hydroxyl group of 4-methyl-5-beta-hydroxyethylthiazole (THZ). This chain is Hydroxyethylthiazole kinase, found in Geobacillus kaustophilus (strain HTA426).